The primary structure comprises 126 residues: CD59 glycoprotein (126 aa).

The first 25 residues, 1–25 (MGIQGGSVLFGLLLALAVFCHSGHS), serve as a signal peptide directing secretion. The UPAR/Ly6 domain maps to 26–106 (LQCYNCPNPT…QLENGGTSLS (81 aa)). 5 disulfides stabilise this stretch: cysteine 28–cysteine 51, cysteine 31–cysteine 38, cysteine 44–cysteine 64, cysteine 70–cysteine 88, and cysteine 89–cysteine 94. N-linked (GlcNAc...) asparagine glycosylation occurs at asparagine 43. The GPI-anchor amidated asparagine moiety is linked to residue asparagine 100. Residues 101 to 126 (GGTSLSEKTVLLLVTPLLAAAWCLHP) constitute a propeptide, removed in mature form.

In terms of assembly, interacts with T-cell surface antigen CD2. Post-translationally, N- and O-glycosylated.

It localises to the cell membrane. It is found in the secreted. Functionally, potent inhibitor of the complement membrane attack complex (MAC) action, which protects self-cells from damage during complement activation. Acts by binding to the beta-haipins of C8 (C8A and C8B) components of the assembling MAC, forming an intermolecular beta-sheet that prevents incorporation of the multiple copies of C9 required for complete formation of the osmolytic pore. This is CD59 glycoprotein from Papio sp. (Baboon).